The sequence spans 192 residues: dTTP/UTP pyrophosphatase (192 aa).

The active-site Proton acceptor is the Asp-71.

It belongs to the Maf family. YhdE subfamily. A divalent metal cation is required as a cofactor.

The protein localises to the cytoplasm. It catalyses the reaction dTTP + H2O = dTMP + diphosphate + H(+). The enzyme catalyses UTP + H2O = UMP + diphosphate + H(+). Functionally, nucleoside triphosphate pyrophosphatase that hydrolyzes dTTP and UTP. May have a dual role in cell division arrest and in preventing the incorporation of modified nucleotides into cellular nucleic acids. The protein is dTTP/UTP pyrophosphatase of Clostridium kluyveri (strain NBRC 12016).